The chain runs to 268 residues: Putative hydro-lyase ACICU_01268 (268 aa).

It belongs to the D-glutamate cyclase family.

This is Putative hydro-lyase ACICU_01268 from Acinetobacter baumannii (strain ACICU).